The chain runs to 317 residues: Ribosomal protein L11 methyltransferase (317 aa).

S-adenosyl-L-methionine contacts are provided by Thr158, Gly179, Asp201, and Asn244.

This sequence belongs to the methyltransferase superfamily. PrmA family.

Its subcellular location is the cytoplasm. The enzyme catalyses L-lysyl-[protein] + 3 S-adenosyl-L-methionine = N(6),N(6),N(6)-trimethyl-L-lysyl-[protein] + 3 S-adenosyl-L-homocysteine + 3 H(+). Methylates ribosomal protein L11. The chain is Ribosomal protein L11 methyltransferase from Streptococcus pyogenes serotype M28 (strain MGAS6180).